The chain runs to 248 residues: Sugar fermentation stimulation protein homolog (248 aa).

Belongs to the SfsA family.

The chain is Sugar fermentation stimulation protein homolog from Prochlorococcus marinus subsp. pastoris (strain CCMP1986 / NIES-2087 / MED4).